We begin with the raw amino-acid sequence, 74 residues long: ATP synthase subunit 9, mitochondrial (74 aa).

2 consecutive transmembrane segments (helical) span residues 8–28 and 45–72; these read IGAG…GNVF and LFGY…LILF.

It belongs to the ATPase C chain family. F-type ATPases have 2 components, CF(1) - the catalytic core - and CF(0) - the membrane proton channel. CF(1) has five subunits: alpha(3), beta(3), gamma(1), delta(1), epsilon(1). CF(0) has three main subunits: a, b and c.

It is found in the mitochondrion membrane. This protein is one of the chains of the nonenzymatic membrane component (F0) of mitochondrial ATPase. In Pisum sativum (Garden pea), this protein is ATP synthase subunit 9, mitochondrial (ATP9).